A 349-amino-acid chain; its full sequence is Putative F-box/kelch-repeat protein At4g02310 (349 aa).

Positions 11–58 (SLFSLLPNDIVLNILARVPRWYHPILSCVSKNLRFLVSSSELKITRSL) constitute an F-box domain. The stretch at 154–204 (KIYVFGGIDDMNKRYYEGIHAQVFDLKTQTWHVGPNLSVKLACLNRSVVTP) is one Kelch repeat.

This chain is Putative F-box/kelch-repeat protein At4g02310, found in Arabidopsis thaliana (Mouse-ear cress).